Consider the following 145-residue polypeptide: Ribosome maturation factor RimP (145 aa).

It belongs to the RimP family.

The protein resides in the cytoplasm. In terms of biological role, required for maturation of 30S ribosomal subunits. This is Ribosome maturation factor RimP from Borreliella burgdorferi (strain ZS7) (Borrelia burgdorferi).